A 245-amino-acid chain; its full sequence is 1-(5-phosphoribosyl)-5-[(5-phosphoribosylamino)methylideneamino] imidazole-4-carboxamide isomerase (245 aa).

Aspartate 8 serves as the catalytic Proton acceptor. Catalysis depends on aspartate 130, which acts as the Proton donor.

The protein belongs to the HisA/HisF family.

The protein localises to the cytoplasm. The catalysed reaction is 1-(5-phospho-beta-D-ribosyl)-5-[(5-phospho-beta-D-ribosylamino)methylideneamino]imidazole-4-carboxamide = 5-[(5-phospho-1-deoxy-D-ribulos-1-ylimino)methylamino]-1-(5-phospho-beta-D-ribosyl)imidazole-4-carboxamide. Its pathway is amino-acid biosynthesis; L-histidine biosynthesis; L-histidine from 5-phospho-alpha-D-ribose 1-diphosphate: step 4/9. The sequence is that of 1-(5-phosphoribosyl)-5-[(5-phosphoribosylamino)methylideneamino] imidazole-4-carboxamide isomerase from Pseudomonas putida (strain W619).